Reading from the N-terminus, the 490-residue chain is Colicin-10 (490 aa).

The span at 1–20 shows a compositional bias: polar residues; that stretch reads MDKVTDNSPDVESTESTEGS. Disordered regions lie at residues 1–29 and 146–171; these read MDKVTDNSPDVESTESTEGSFPTVGVDTG and QKAREEAEAAEKALREAERQRDEIAR. Positions 146–170 are enriched in basic and acidic residues; that stretch reads QKAREEAEAAEKALREAERQRDEIA. A helical transmembrane segment spans residues 447–467; sequence IVALMFSFIVGAPLGFWGIAI.

This sequence belongs to the channel forming colicin family.

The protein localises to the host membrane. Its function is as follows. This colicin is a channel-forming colicin. This class of transmembrane toxins depolarize the cytoplasmic membrane, leading to dissipation of cellular energy. Functionally, colicins are polypeptide toxins produced by and active against E.coli and closely related bacteria. The protein is Colicin-10 (cta) of Escherichia coli.